Here is a 315-residue protein sequence, read N- to C-terminus: Homoserine kinase (315 aa).

Position 97–107 (97–107) interacts with ATP; that stretch reads PPARGLGSSAT.

This sequence belongs to the GHMP kinase family. Homoserine kinase subfamily.

It localises to the cytoplasm. The enzyme catalyses L-homoserine + ATP = O-phospho-L-homoserine + ADP + H(+). It functions in the pathway amino-acid biosynthesis; L-threonine biosynthesis; L-threonine from L-aspartate: step 4/5. Catalyzes the ATP-dependent phosphorylation of L-homoserine to L-homoserine phosphate. The polypeptide is Homoserine kinase (Prochlorococcus marinus (strain NATL1A)).